We begin with the raw amino-acid sequence, 1192 residues long: ATP-dependent helicase/deoxyribonuclease subunit B (1192 aa).

The protein belongs to the helicase family. AddB/RexB type 2 subfamily. As to quaternary structure, heterodimer of AddA and RexB. It depends on Mg(2+) as a cofactor.

The heterodimer acts as both an ATP-dependent DNA helicase and an ATP-dependent, dual-direction single-stranded exonuclease. Recognizes the chi site generating a DNA molecule suitable for the initiation of homologous recombination. This subunit has 5' -&gt; 3' nuclease activity but not helicase activity. In Pediococcus pentosaceus (strain ATCC 25745 / CCUG 21536 / LMG 10740 / 183-1w), this protein is ATP-dependent helicase/deoxyribonuclease subunit B.